Reading from the N-terminus, the 448-residue chain is Deoxyguanosinetriphosphate triphosphohydrolase-like protein (448 aa).

The HD domain occupies 67–260; sequence RLTHSLEVSQ…MELADDIAYG (194 aa).

It belongs to the dGTPase family. Type 2 subfamily.

In Aliivibrio fischeri (strain MJ11) (Vibrio fischeri), this protein is Deoxyguanosinetriphosphate triphosphohydrolase-like protein.